The following is a 371-amino-acid chain: MSLENKNIIITAGGTGGHIYPALAIAELLRQNKANVTWVGTPNSMEASIVPEYFNIQFIKSSGVRRKGIIKKITFPLKLAYNTLKSRSLLKKLKADLVIGFGGYVSGPICLAAAQINIPVIIHEQNAKIGLTNRILAKFATTICLAFEIENLHKQFSSKQLAKTKIVGNPVRKDIVALNDKARIYTDSSTLKILVLGGSQGAKAINEIIPKLIQKSNEQGINIKVWHQTGKLSLEETKDAYKDISQNHIKDIAAFIDDMAIAYNWADLVICRAGALTVSECAIAGLPAIFIPLPSAVDDHQFFNVQNIVNNNAGFCLRQQQMTLENLLAIIKPLNQDRSKLEQMSKMAKKTLIKNSSEQILDCVKKILNNK.

UDP-N-acetyl-alpha-D-glucosamine contacts are provided by residues 15–17, N126, R172, S199, I256, 275–280, and Q301; these read TGG and ALTVSE.

The protein belongs to the glycosyltransferase 28 family. MurG subfamily.

The protein resides in the cell inner membrane. The enzyme catalyses di-trans,octa-cis-undecaprenyl diphospho-N-acetyl-alpha-D-muramoyl-L-alanyl-D-glutamyl-meso-2,6-diaminopimeloyl-D-alanyl-D-alanine + UDP-N-acetyl-alpha-D-glucosamine = di-trans,octa-cis-undecaprenyl diphospho-[N-acetyl-alpha-D-glucosaminyl-(1-&gt;4)]-N-acetyl-alpha-D-muramoyl-L-alanyl-D-glutamyl-meso-2,6-diaminopimeloyl-D-alanyl-D-alanine + UDP + H(+). It functions in the pathway cell wall biogenesis; peptidoglycan biosynthesis. Cell wall formation. Catalyzes the transfer of a GlcNAc subunit on undecaprenyl-pyrophosphoryl-MurNAc-pentapeptide (lipid intermediate I) to form undecaprenyl-pyrophosphoryl-MurNAc-(pentapeptide)GlcNAc (lipid intermediate II). In Francisella tularensis subsp. mediasiatica (strain FSC147), this protein is UDP-N-acetylglucosamine--N-acetylmuramyl-(pentapeptide) pyrophosphoryl-undecaprenol N-acetylglucosamine transferase.